Reading from the N-terminus, the 366-residue chain is D-alanine--D-alanine ligase (366 aa).

Residues 146–352 (KICFEHAGLQ…YTELINRLIE (207 aa)) enclose the ATP-grasp domain. ATP is bound at residue 179 to 234 (EKKLRYPMFVKPANMGSSVGISKAHNRNELIEAIELALAYDRKFLIEKAINAREME). Mg(2+) is bound by residues aspartate 305, glutamate 319, and asparagine 321.

The protein belongs to the D-alanine--D-alanine ligase family. The cofactor is Mg(2+). It depends on Mn(2+) as a cofactor.

The protein localises to the cytoplasm. The enzyme catalyses 2 D-alanine + ATP = D-alanyl-D-alanine + ADP + phosphate + H(+). It functions in the pathway cell wall biogenesis; peptidoglycan biosynthesis. Its function is as follows. Cell wall formation. The sequence is that of D-alanine--D-alanine ligase from Chloroherpeton thalassium (strain ATCC 35110 / GB-78).